Consider the following 248-residue polypeptide: Ribosomal RNA small subunit methyltransferase J (248 aa).

S-adenosyl-L-methionine contacts are provided by residues 101 to 102 (RD), 117 to 118 (ER), 153 to 154 (SS), and aspartate 171.

This sequence belongs to the methyltransferase superfamily. RsmJ family.

It localises to the cytoplasm. It catalyses the reaction guanosine(1516) in 16S rRNA + S-adenosyl-L-methionine = N(2)-methylguanosine(1516) in 16S rRNA + S-adenosyl-L-homocysteine + H(+). Functionally, specifically methylates the guanosine in position 1516 of 16S rRNA. In Serratia proteamaculans (strain 568), this protein is Ribosomal RNA small subunit methyltransferase J.